A 240-amino-acid chain; its full sequence is Lipoprotein-releasing system ATP-binding protein LolD (240 aa).

The ABC transporter domain maps to Ile-15–Val-240. Gly-51–Ser-58 is a binding site for ATP.

Belongs to the ABC transporter superfamily. Lipoprotein translocase (TC 3.A.1.125) family. As to quaternary structure, the complex is composed of two ATP-binding proteins (LolD) and two transmembrane proteins (LolC and LolE).

The protein localises to the cell inner membrane. Part of the ABC transporter complex LolCDE involved in the translocation of mature outer membrane-directed lipoproteins, from the inner membrane to the periplasmic chaperone, LolA. Responsible for the formation of the LolA-lipoprotein complex in an ATP-dependent manner. This chain is Lipoprotein-releasing system ATP-binding protein LolD, found in Xylella fastidiosa (strain 9a5c).